Reading from the N-terminus, the 243-residue chain is 5'-methylthioadenosine/S-adenosylhomocysteine nucleosidase (243 aa).

Glutamate 12 functions as the Proton acceptor in the catalytic mechanism. Residues glycine 78, methionine 158, and 179 to 180 contribute to the substrate site; that span reads ME. Residue aspartate 203 is the Proton donor of the active site.

It belongs to the PNP/UDP phosphorylase family. MtnN subfamily.

It carries out the reaction S-adenosyl-L-homocysteine + H2O = S-(5-deoxy-D-ribos-5-yl)-L-homocysteine + adenine. The catalysed reaction is S-methyl-5'-thioadenosine + H2O = 5-(methylsulfanyl)-D-ribose + adenine. It catalyses the reaction 5'-deoxyadenosine + H2O = 5-deoxy-D-ribose + adenine. Its pathway is amino-acid biosynthesis; L-methionine biosynthesis via salvage pathway; S-methyl-5-thio-alpha-D-ribose 1-phosphate from S-methyl-5'-thioadenosine (hydrolase route): step 1/2. Catalyzes the irreversible cleavage of the glycosidic bond in both 5'-methylthioadenosine (MTA) and S-adenosylhomocysteine (SAH/AdoHcy) to adenine and the corresponding thioribose, 5'-methylthioribose and S-ribosylhomocysteine, respectively. Also cleaves 5'-deoxyadenosine, a toxic by-product of radical S-adenosylmethionine (SAM) enzymes, into 5-deoxyribose and adenine. In Colwellia psychrerythraea (strain 34H / ATCC BAA-681) (Vibrio psychroerythus), this protein is 5'-methylthioadenosine/S-adenosylhomocysteine nucleosidase.